We begin with the raw amino-acid sequence, 417 residues long: Inhibitor of growth protein 3 (417 aa).

Disordered regions lie at residues 128–203 (TPSQ…YNTN) and 286–320 (QTLSSSSTDSRSGRKSKNNNKSSSQQSSSSSSSSS). Basic residues predominate over residues 136-152 (HHAHSHTPVEKRKHNPS). The segment covering 156–168 (GATDHVPEKKFKS) has biased composition (basic and acidic residues). Low complexity-rich tracts occupy residues 189 to 203 (NNNSSSSSNNAYNTN), 286 to 295 (QTLSSSSTDS), and 307 to 320 (SSSQQSSSSSSSSS). A PHD-type zinc finger spans residues 359–408 (PRYCICNQVSYGEMVGCDNQDCPIEWFHYGCVGLTEAPKGKWYCPQCTAA). Cys-362, Cys-364, Cys-375, Cys-380, His-386, Cys-389, Cys-402, and Cys-405 together coordinate Zn(2+).

The protein belongs to the ING family. In terms of assembly, interacts with H3K4me3 and to a lesser extent with H3K4me2. Component of the NuA4 histone acetyltransferase complex.

It is found in the nucleus. Its function is as follows. Component of the NuA4 histone acetyltransferase (HAT) complex which is involved in transcriptional activation of select genes principally by acetylation of nucleosomal histone H4 and H2A. This modification may both alter nucleosome - DNA interactions and promote interaction of the modified histones with other proteins which positively regulate transcription. NuA4 may also play a direct role in DNA repair when directly recruited to sites of DNA damage. The sequence is that of Inhibitor of growth protein 3 (ING3) from Gallus gallus (Chicken).